A 376-amino-acid chain; its full sequence is Glucose-1-phosphate adenylyltransferase (376 aa).

Residues Tyr101, Gly166, 181 to 182 (EK), and Ser192 each bind alpha-D-glucose 1-phosphate.

The protein belongs to the bacterial/plant glucose-1-phosphate adenylyltransferase family. As to quaternary structure, homotetramer.

It catalyses the reaction alpha-D-glucose 1-phosphate + ATP + H(+) = ADP-alpha-D-glucose + diphosphate. It functions in the pathway glycan biosynthesis; glycogen biosynthesis. Its function is as follows. Involved in the biosynthesis of ADP-glucose, a building block required for the elongation reactions to produce glycogen. Catalyzes the reaction between ATP and alpha-D-glucose 1-phosphate (G1P) to produce pyrophosphate and ADP-Glc. The polypeptide is Glucose-1-phosphate adenylyltransferase (Bacillus cereus (strain Q1)).